The primary structure comprises 1414 residues: DNA-directed RNA polymerase subunit beta' (1414 aa).

Residues Cys70, Cys72, Cys85, and Cys88 each coordinate Zn(2+). The Mg(2+) site is built by Asp460, Asp462, and Asp464. Cys819, Cys893, Cys900, and Cys903 together coordinate Zn(2+). The interval Ala1391 to Glu1414 is disordered. The segment covering Pro1400–Glu1414 has biased composition (low complexity).

Belongs to the RNA polymerase beta' chain family. As to quaternary structure, the RNAP catalytic core consists of 2 alpha, 1 beta, 1 beta' and 1 omega subunit. When a sigma factor is associated with the core the holoenzyme is formed, which can initiate transcription. Mg(2+) serves as cofactor. Zn(2+) is required as a cofactor.

The catalysed reaction is RNA(n) + a ribonucleoside 5'-triphosphate = RNA(n+1) + diphosphate. In terms of biological role, DNA-dependent RNA polymerase catalyzes the transcription of DNA into RNA using the four ribonucleoside triphosphates as substrates. The sequence is that of DNA-directed RNA polymerase subunit beta' from Burkholderia lata (strain ATCC 17760 / DSM 23089 / LMG 22485 / NCIMB 9086 / R18194 / 383).